A 120-amino-acid chain; its full sequence is Large ribosomal subunit protein uL22 (120 aa).

Residues 1–25 are disordered; that stretch reads MFVNKKYTAKGKNLPSSPKKVRPIA.

This sequence belongs to the universal ribosomal protein uL22 family. As to quaternary structure, part of the 50S ribosomal subunit.

Functionally, this protein binds specifically to 23S rRNA; its binding is stimulated by other ribosomal proteins, e.g. L4, L17, and L20. It is important during the early stages of 50S assembly. It makes multiple contacts with different domains of the 23S rRNA in the assembled 50S subunit and ribosome. Its function is as follows. The globular domain of the protein is located near the polypeptide exit tunnel on the outside of the subunit, while an extended beta-hairpin is found that lines the wall of the exit tunnel in the center of the 70S ribosome. This chain is Large ribosomal subunit protein uL22, found in Borrelia recurrentis (strain A1).